We begin with the raw amino-acid sequence, 342 residues long: Holliday junction branch migration complex subunit RuvB (342 aa).

The interval 1 to 179 (MTNILSPEKS…FGIPMRLNFY (179 aa)) is large ATPase domain (RuvB-L). ATP contacts are provided by residues isoleucine 18, arginine 19, glycine 60, lysine 63, threonine 64, threonine 65, 126-128 (EDF), arginine 169, tyrosine 179, and arginine 216. Threonine 64 is a binding site for Mg(2+). The small ATPAse domain (RuvB-S) stretch occupies residues 180–250 (NTEELKQVLN…ICDFGLKRLT (71 aa)). The tract at residues 253–342 (SIGLDSNDYR…HQFNILNENE (90 aa)) is head domain (RuvB-H). DNA is bound by residues arginine 289, arginine 308, and arginine 313.

The protein belongs to the RuvB family. Homohexamer. Forms an RuvA(8)-RuvB(12)-Holliday junction (HJ) complex. HJ DNA is sandwiched between 2 RuvA tetramers; dsDNA enters through RuvA and exits via RuvB. An RuvB hexamer assembles on each DNA strand where it exits the tetramer. Each RuvB hexamer is contacted by two RuvA subunits (via domain III) on 2 adjacent RuvB subunits; this complex drives branch migration. In the full resolvosome a probable DNA-RuvA(4)-RuvB(12)-RuvC(2) complex forms which resolves the HJ.

Its subcellular location is the cytoplasm. The catalysed reaction is ATP + H2O = ADP + phosphate + H(+). The RuvA-RuvB-RuvC complex processes Holliday junction (HJ) DNA during genetic recombination and DNA repair, while the RuvA-RuvB complex plays an important role in the rescue of blocked DNA replication forks via replication fork reversal (RFR). RuvA specifically binds to HJ cruciform DNA, conferring on it an open structure. The RuvB hexamer acts as an ATP-dependent pump, pulling dsDNA into and through the RuvAB complex. RuvB forms 2 homohexamers on either side of HJ DNA bound by 1 or 2 RuvA tetramers; 4 subunits per hexamer contact DNA at a time. Coordinated motions by a converter formed by DNA-disengaged RuvB subunits stimulates ATP hydrolysis and nucleotide exchange. Immobilization of the converter enables RuvB to convert the ATP-contained energy into a lever motion, pulling 2 nucleotides of DNA out of the RuvA tetramer per ATP hydrolyzed, thus driving DNA branch migration. The RuvB motors rotate together with the DNA substrate, which together with the progressing nucleotide cycle form the mechanistic basis for DNA recombination by continuous HJ branch migration. Branch migration allows RuvC to scan DNA until it finds its consensus sequence, where it cleaves and resolves cruciform DNA. This chain is Holliday junction branch migration complex subunit RuvB, found in Rickettsia typhi (strain ATCC VR-144 / Wilmington).